The following is a 431-amino-acid chain: Serine--tRNA ligase (431 aa).

235 to 237 (TAE) contacts L-serine. Residues 266-268 (RRE) and Val282 contribute to the ATP site. Glu289 contributes to the L-serine binding site. 353–356 (EASS) contributes to the ATP binding site. L-serine is bound at residue Ser389.

It belongs to the class-II aminoacyl-tRNA synthetase family. Type-1 seryl-tRNA synthetase subfamily. In terms of assembly, homodimer. The tRNA molecule binds across the dimer.

Its subcellular location is the cytoplasm. It catalyses the reaction tRNA(Ser) + L-serine + ATP = L-seryl-tRNA(Ser) + AMP + diphosphate + H(+). The catalysed reaction is tRNA(Sec) + L-serine + ATP = L-seryl-tRNA(Sec) + AMP + diphosphate + H(+). It participates in aminoacyl-tRNA biosynthesis; selenocysteinyl-tRNA(Sec) biosynthesis; L-seryl-tRNA(Sec) from L-serine and tRNA(Sec): step 1/1. Its function is as follows. Catalyzes the attachment of serine to tRNA(Ser). Is also able to aminoacylate tRNA(Sec) with serine, to form the misacylated tRNA L-seryl-tRNA(Sec), which will be further converted into selenocysteinyl-tRNA(Sec). This Prosthecochloris aestuarii (strain DSM 271 / SK 413) protein is Serine--tRNA ligase.